A 437-amino-acid chain; its full sequence is Dolichyl-diphosphooligosaccharide--protein glycosyltransferase subunit wbp1 (437 aa).

Residues 1–19 form the signal peptide; sequence MKSALCIALALTWSLLVQA. The Lumenal portion of the chain corresponds to 20–401; sequence ARQTVLAVAD…FPRFLPHAYP (382 aa). N-linked (GlcNAc...) asparagine glycosylation is found at asparagine 275 and asparagine 289. A helical membrane pass occupies residues 402–422; that stretch reads YYASCFSVLGAFLLFCGIWLL. Over 423-437 the chain is Cytoplasmic; sequence QKPAKPVVPSAKKQN.

The protein belongs to the DDOST 48 kDa subunit family. In terms of assembly, component of the oligosaccharyltransferase (OST) complex.

It is found in the endoplasmic reticulum. It localises to the membrane. The protein operates within protein modification; protein glycosylation. In terms of biological role, subunit of the oligosaccharyl transferase (OST) complex that catalyzes the initial transfer of a defined glycan (Glc(3)Man(9)GlcNAc(2) in eukaryotes) from the lipid carrier dolichol-pyrophosphate to an asparagine residue within an Asn-X-Ser/Thr consensus motif in nascent polypeptide chains, the first step in protein N-glycosylation. N-glycosylation occurs cotranslationally and the complex associates with the Sec61 complex at the channel-forming translocon complex that mediates protein translocation across the endoplasmic reticulum (ER). All subunits are required for a maximal enzyme activity. The protein is Dolichyl-diphosphooligosaccharide--protein glycosyltransferase subunit wbp1 (wbp1) of Schizosaccharomyces pombe (strain 972 / ATCC 24843) (Fission yeast).